The sequence spans 550 residues: Glucose-6-phosphate isomerase 3 (550 aa).

The Proton donor role is filled by Glu357. Residues His388 and Lys514 contribute to the active site.

It belongs to the GPI family.

Its subcellular location is the cytoplasm. It carries out the reaction alpha-D-glucose 6-phosphate = beta-D-fructose 6-phosphate. The protein operates within carbohydrate biosynthesis; gluconeogenesis. It participates in carbohydrate degradation; glycolysis; D-glyceraldehyde 3-phosphate and glycerone phosphate from D-glucose: step 2/4. Catalyzes the reversible isomerization of glucose-6-phosphate to fructose-6-phosphate. The protein is Glucose-6-phosphate isomerase 3 of Rhodococcus jostii (strain RHA1).